A 313-amino-acid polypeptide reads, in one-letter code: Olfactory receptor 4Q3 (313 aa).

Residues 1-25 (MKKEQDSNVTEFVLLGLSSSWELQL) lie on the Extracellular side of the membrane. N-linked (GlcNAc...) asparagine glycosylation occurs at N8. A helical transmembrane segment spans residues 26 to 49 (FLFLLFLFFYIAIVLGNLLIVVTV). At 50–58 (QAHAHLLQS) the chain is on the cytoplasmic side. Residues 59 to 80 (PMYYFLGHLSFIDLCLSCVTVP) form a helical membrane-spanning segment. The Extracellular portion of the chain corresponds to 81-101 (KMLGDFLQQGKSISFSGCLAQ). Cysteines 98 and 190 form a disulfide. Residues 102 to 121 (IYFLHFLGASEMFLLTVMAY) traverse the membrane as a helical segment. The Cytoplasmic portion of the chain corresponds to 122 to 140 (DRYVAICNPLRYLTVMNPQ). The chain crosses the membrane as a helical span at residues 141–159 (LCLWLVLACWCGGFIHSIM). Topologically, residues 160 to 196 (QVILVIQLPFCGPNELDNFYCDVPQVIKLACMDTYVV) are extracellular. The chain crosses the membrane as a helical span at residues 197 to 220 (EVLVIANSGLLSLVCFLVLLFSYA). At 221-236 (IILITLRTHFCQGQNK) the chain is on the cytoplasmic side. A helical membrane pass occupies residues 237-259 (VFSTCASHLTVVSLIFVPCVFIY). Topologically, residues 260-270 (LRPFCSFSVDK) are extracellular. A helical membrane pass occupies residues 271-290 (IFSLFYTVITPMLNPLIYTL). Residues 291 to 313 (RNTDMKTAMKKLRIKPCGIPLPC) lie on the Cytoplasmic side of the membrane.

This sequence belongs to the G-protein coupled receptor 1 family.

Its subcellular location is the cell membrane. Functionally, odorant receptor. The protein is Olfactory receptor 4Q3 (OR4Q3) of Homo sapiens (Human).